We begin with the raw amino-acid sequence, 321 residues long: tRNA(Ile)-lysidine synthase (321 aa).

21-26 (SYGSDS) serves as a coordination point for ATP.

It belongs to the tRNA(Ile)-lysidine synthase family.

The protein resides in the cytoplasm. It catalyses the reaction cytidine(34) in tRNA(Ile2) + L-lysine + ATP = lysidine(34) in tRNA(Ile2) + AMP + diphosphate + H(+). Ligates lysine onto the cytidine present at position 34 of the AUA codon-specific tRNA(Ile) that contains the anticodon CAU, in an ATP-dependent manner. Cytidine is converted to lysidine, thus changing the amino acid specificity of the tRNA from methionine to isoleucine. The sequence is that of tRNA(Ile)-lysidine synthase from Campylobacter jejuni (strain RM1221).